The primary structure comprises 235 residues: Pro-opiomelanocortin (235 aa).

The signal sequence occupies residues 1-26 (MPRFCYSRSGALLLALLLQTSIDVWS). The residue at position 87 (Phe87) is a Phenylalanine amide. Residues 88 to 126 (GPRNSSSAGSAAQRRAEEEAVWGDGSPEPSPREGKRSYS) are disordered. Residues 90–100 (RNSSSAGSAAQ) show a composition bias toward low complexity. N-linked (GlcNAc...) asparagine glycosylation is present at Asn91. A propeptide spanning residues 103–121 (AEEEAVWGDGSPEPSPREG) is cleaved from the precursor. Positions 117-126 (SPREGKRSYS) are enriched in basic and acidic residues. N-acetylserine; in Corticotropin is present on Ser124. The residue at position 136 (Val136) is a Valine amide. An N-linked (GlcNAc...) asparagine glycan is attached at Asn152. Ser154 carries the post-translational modification Phosphoserine. The interval 179–210 (ESDAEKDDGPYRVEHFRWSNPPKDKRYGGFMT) is disordered. Over residues 185 to 205 (DDGPYRVEHFRWSNPPKDKRY) the composition is skewed to basic and acidic residues.

This sequence belongs to the POMC family. Specific enzymatic cleavages at paired basic residues yield the different active peptides. As to expression, ACTH and MSH are produced by the pituitary gland.

It is found in the secreted. In terms of biological role, stimulates the adrenal glands to release cortisol. Anorexigenic peptide. Increases the pigmentation of skin by increasing melanin production in melanocytes. Its function is as follows. Increases the pigmentation of skin by increasing melanin production in melanocytes. Functionally, endogenous orexigenic opiate. In terms of biological role, endogenous opiate. This chain is Pro-opiomelanocortin (Pomc), found in Mus musculus (Mouse).